Here is a 118-residue protein sequence, read N- to C-terminus: Large ribosomal subunit protein bL17 (118 aa).

It belongs to the bacterial ribosomal protein bL17 family. As to quaternary structure, part of the 50S ribosomal subunit. Contacts protein L32.

The chain is Large ribosomal subunit protein bL17 from Thermus thermophilus (strain ATCC BAA-163 / DSM 7039 / HB27).